The primary structure comprises 126 residues: Profilin (126 aa).

This sequence belongs to the profilin family. As to quaternary structure, occurs in many kinds of cells as a complex with monomeric actin in a 1:1 ratio.

The protein localises to the cytoplasm. The protein resides in the cytoskeleton. Binds to actin and affects the structure of the cytoskeleton. At high concentrations, profilin prevents the polymerization of actin, whereas it enhances it at low concentrations. By binding to PIP2, it inhibits the formation of IP3 and DG. The sequence is that of Profilin from Bombyx mori (Silk moth).